The chain runs to 515 residues: Endoglucanase 23 (515 aa).

Positions 1–29 are cleaved as a signal peptide; that stretch reads MALLSAPVRRRRSRVRVLLVCCCLLLALA. The active-site Nucleophile is Asp-95. 3 N-linked (GlcNAc...) asparagine glycosylation sites follow: Asn-178, Asn-375, and Asn-384. Residue His-426 is part of the active site. Asn-452 is a glycosylation site (N-linked (GlcNAc...) asparagine). Active-site residues include Asp-477 and Glu-486.

This sequence belongs to the glycosyl hydrolase 9 (cellulase E) family.

Its subcellular location is the secreted. The enzyme catalyses Endohydrolysis of (1-&gt;4)-beta-D-glucosidic linkages in cellulose, lichenin and cereal beta-D-glucans.. The chain is Endoglucanase 23 (GLU12) from Oryza sativa subsp. japonica (Rice).